The sequence spans 466 residues: Ribosomal protein uS12 methylthiotransferase RimO (466 aa).

The MTTase N-terminal domain occupies 18 to 133 (PRIGFVSLGC…VMDAVHQHVP (116 aa)). The [4Fe-4S] cluster site is built by Cys27, Cys63, Cys92, Cys164, Cys168, and Cys171. The region spanning 150 to 391 (LTPKHYAYLK…MAVAEAVSTA (242 aa)) is the Radical SAM core domain. Residues 394 to 466 (QRRVGSSMQV…QGHDLIGELI (73 aa)) form the TRAM domain.

This sequence belongs to the methylthiotransferase family. RimO subfamily. It depends on [4Fe-4S] cluster as a cofactor.

Its subcellular location is the cytoplasm. The enzyme catalyses L-aspartate(89)-[ribosomal protein uS12]-hydrogen + (sulfur carrier)-SH + AH2 + 2 S-adenosyl-L-methionine = 3-methylsulfanyl-L-aspartate(89)-[ribosomal protein uS12]-hydrogen + (sulfur carrier)-H + 5'-deoxyadenosine + L-methionine + A + S-adenosyl-L-homocysteine + 2 H(+). Its function is as follows. Catalyzes the methylthiolation of an aspartic acid residue of ribosomal protein uS12. This chain is Ribosomal protein uS12 methylthiotransferase RimO, found in Leptothrix cholodnii (strain ATCC 51168 / LMG 8142 / SP-6) (Leptothrix discophora (strain SP-6)).